Consider the following 130-residue polypeptide: Small ribosomal subunit protein bS6 (130 aa).

Residues 100–130 (SPMVKAKDERRERREDFAEAGDDVEAGDSEE) form a disordered region. Residues 104 to 116 (KAKDERRERREDF) show a composition bias toward basic and acidic residues. A compositionally biased stretch (acidic residues) spans 117–130 (AEAGDDVEAGDSEE).

It belongs to the bacterial ribosomal protein bS6 family.

Functionally, binds together with bS18 to 16S ribosomal RNA. This is Small ribosomal subunit protein bS6 from Pectobacterium atrosepticum (strain SCRI 1043 / ATCC BAA-672) (Erwinia carotovora subsp. atroseptica).